The chain runs to 1134 residues: Tyrosine-protein kinase receptor Tie-1 (1134 aa).

Positions 1–22 are cleaved as a signal peptide; that stretch reads MVWWGSSLLLPTLFLASHVGAS. Over 23–755 the chain is Extracellular; the sequence is VDLTLLANLR…SRAAEEGLDQ (733 aa). An Ig-like C2-type 1 domain is found at 43 to 123; the sequence is CVSGEAGAGR…VLYVHNSPGA (81 aa). 2 N-linked (GlcNAc...) asparagine glycosylation sites follow: asparagine 81 and asparagine 159. 3 EGF-like domains span residues 212-254, 256-301, and 303-343; these read GCGA…TRCE, ACRE…SQCQ, and ACAP…VHCE. Disulfide bonds link cysteine 226–cysteine 235, cysteine 229–cysteine 242, cysteine 244–cysteine 253, cysteine 266–cysteine 276, cysteine 270–cysteine 289, cysteine 291–cysteine 300, cysteine 313–cysteine 325, cysteine 319–cysteine 331, and cysteine 333–cysteine 342. The Ig-like C2-type 2 domain maps to 349–440; it reads PQILSMATEV…GQDSRRFKVN (92 aa). 3 Fibronectin type-III domains span residues 444–543, 546–638, and 642–736; these read PPVP…CPEP, QPWL…LPPS, and APRH…LGNG. N-linked (GlcNAc...) asparagine glycans are attached at residues asparagine 501, asparagine 592, and asparagine 705. Residues 756–780 traverse the membrane as a helical segment; it reads QLVLAVVGSVSATCLTILAALLALV. Over 781-1134 the chain is Cytoplasmic; that stretch reads CIRRSCLHRR…AGIDATAEEA (354 aa). The Protein kinase domain occupies 835 to 1114; the sequence is ITFEDLIGEG…RMLEARKAYV (280 aa). ATP is bound by residues 841-849 and lysine 866; that span reads IGEGNFGQV. Aspartate 975 serves as the catalytic Proton acceptor. Tyrosine 1003 is modified (phosphotyrosine; by autocatalysis).

This sequence belongs to the protein kinase superfamily. Tyr protein kinase family. Tie subfamily. As to quaternary structure, heterodimer with TEK/TIE2. Interacts with SVEP1 (via C-terminus). In terms of processing, phosphorylated on tyrosine residues in response to ANGPT1, most likely by TEK/TIE2. In terms of tissue distribution, specifically expressed in developing vascular endothelial cells. Abundantly expressed in lung and heart, moderately in brain, liver and kidney, and weakly in thymus, spleen and testis.

The protein localises to the cell membrane. The catalysed reaction is L-tyrosyl-[protein] + ATP = O-phospho-L-tyrosyl-[protein] + ADP + H(+). Transmembrane tyrosine-protein kinase that may modulate TEK/TIE2 activity and contribute to the regulation of angiogenesis. The sequence is that of Tyrosine-protein kinase receptor Tie-1 (Tie1) from Mus musculus (Mouse).